Here is a 73-residue protein sequence, read N- to C-terminus: Putative membrane protein insertion efficiency factor (73 aa).

The protein belongs to the UPF0161 family.

The protein resides in the cell inner membrane. Its function is as follows. Could be involved in insertion of integral membrane proteins into the membrane. This is Putative membrane protein insertion efficiency factor from Neisseria gonorrhoeae (strain ATCC 700825 / FA 1090).